The chain runs to 228 residues: UPF0758 protein Gura_4138 (228 aa).

Positions 106–228 constitute an MPN domain; it reads RFTSPSQVFE…FLSFVDRGMM (123 aa). Positions 177, 179, and 190 each coordinate Zn(2+). The JAMM motif signature appears at 177-190; that stretch reads HNHPTGDPTPSRED.

It belongs to the UPF0758 family.

This Geotalea uraniireducens (strain Rf4) (Geobacter uraniireducens) protein is UPF0758 protein Gura_4138.